The chain runs to 201 residues: Ribonuclease HII (201 aa).

Residues Asp12–Glu201 form the RNase H type-2 domain. A divalent metal cation is bound by residues Asp18, Glu19, and Asp110.

It belongs to the RNase HII family. The cofactor is Mn(2+). Mg(2+) is required as a cofactor.

It is found in the cytoplasm. The catalysed reaction is Endonucleolytic cleavage to 5'-phosphomonoester.. Functionally, endonuclease that specifically degrades the RNA of RNA-DNA hybrids. In Pseudomonas paraeruginosa (strain DSM 24068 / PA7) (Pseudomonas aeruginosa (strain PA7)), this protein is Ribonuclease HII.